A 337-amino-acid chain; its full sequence is tRNA N6-adenosine threonylcarbamoyltransferase (337 aa).

Fe cation-binding residues include His-110 and His-114. Substrate contacts are provided by residues Val-132–Gly-136, Asp-165, Gly-178, Asp-182, and Asn-268. Asp-293 contacts Fe cation.

The protein belongs to the KAE1 / TsaD family. The cofactor is Fe(2+).

The protein localises to the cytoplasm. The catalysed reaction is L-threonylcarbamoyladenylate + adenosine(37) in tRNA = N(6)-L-threonylcarbamoyladenosine(37) in tRNA + AMP + H(+). In terms of biological role, required for the formation of a threonylcarbamoyl group on adenosine at position 37 (t(6)A37) in tRNAs that read codons beginning with adenine. Is involved in the transfer of the threonylcarbamoyl moiety of threonylcarbamoyl-AMP (TC-AMP) to the N6 group of A37, together with TsaE and TsaB. TsaD likely plays a direct catalytic role in this reaction. The chain is tRNA N6-adenosine threonylcarbamoyltransferase from Sulfurihydrogenibium sp. (strain YO3AOP1).